A 149-amino-acid polypeptide reads, in one-letter code: UPF0178 protein VV1_1847 (149 aa).

The protein belongs to the UPF0178 family.

The polypeptide is UPF0178 protein VV1_1847 (Vibrio vulnificus (strain CMCP6)).